A 259-amino-acid polypeptide reads, in one-letter code: 4-hydroxy-tetrahydrodipicolinate reductase (259 aa).

NAD(+) contacts are provided by residues 8 to 13 (GFKGRM), 93 to 95 (GTT), and 119 to 122 (APNF). The active-site Proton donor/acceptor is histidine 149. Histidine 150 serves as a coordination point for (S)-2,3,4,5-tetrahydrodipicolinate. Residue lysine 153 is the Proton donor of the active site. Residue 159-160 (GT) coordinates (S)-2,3,4,5-tetrahydrodipicolinate.

This sequence belongs to the DapB family.

The protein resides in the cytoplasm. The enzyme catalyses (S)-2,3,4,5-tetrahydrodipicolinate + NAD(+) + H2O = (2S,4S)-4-hydroxy-2,3,4,5-tetrahydrodipicolinate + NADH + H(+). It carries out the reaction (S)-2,3,4,5-tetrahydrodipicolinate + NADP(+) + H2O = (2S,4S)-4-hydroxy-2,3,4,5-tetrahydrodipicolinate + NADPH + H(+). The protein operates within amino-acid biosynthesis; L-lysine biosynthesis via DAP pathway; (S)-tetrahydrodipicolinate from L-aspartate: step 4/4. Catalyzes the conversion of 4-hydroxy-tetrahydrodipicolinate (HTPA) to tetrahydrodipicolinate. This Enterococcus faecalis (strain ATCC 700802 / V583) protein is 4-hydroxy-tetrahydrodipicolinate reductase.